The chain runs to 186 residues: Elongation factor P (186 aa).

The protein belongs to the elongation factor P family.

The protein localises to the cytoplasm. Its pathway is protein biosynthesis; polypeptide chain elongation. Its function is as follows. Involved in peptide bond synthesis. Stimulates efficient translation and peptide-bond synthesis on native or reconstituted 70S ribosomes in vitro. Probably functions indirectly by altering the affinity of the ribosome for aminoacyl-tRNA, thus increasing their reactivity as acceptors for peptidyl transferase. The polypeptide is Elongation factor P (Coprothermobacter proteolyticus (strain ATCC 35245 / DSM 5265 / OCM 4 / BT)).